The chain runs to 532 residues: Arginine--tRNA ligase (532 aa).

A 'HIGH' region motif is present at residues Ala122 to Ser132.

This sequence belongs to the class-I aminoacyl-tRNA synthetase family. In terms of assembly, monomer.

It localises to the cytoplasm. The enzyme catalyses tRNA(Arg) + L-arginine + ATP = L-arginyl-tRNA(Arg) + AMP + diphosphate. The sequence is that of Arginine--tRNA ligase from Elusimicrobium minutum (strain Pei191).